Consider the following 64-residue polypeptide: Large ribosomal subunit protein uL29 (64 aa).

Belongs to the universal ribosomal protein uL29 family.

This Synechococcus elongatus (strain ATCC 33912 / PCC 7942 / FACHB-805) (Anacystis nidulans R2) protein is Large ribosomal subunit protein uL29.